The sequence spans 134 residues: Photosystem II assembly factor lipoprotein Psb27 (134 aa).

Residues 1–21 (MKRFWAMVCALFLSVSLLLTS) form the signal peptide. C22 carries N-palmitoyl cysteine lipidation. Residue C22 is the site of S-diacylglycerol cysteine attachment.

It belongs to the Psb27 family. Part of a photosystem II (PSII) assembly intermediate complex PSII-I; crystallized from a strain deleted of psbJ, it forms monomeric PSII before addition of the oxygen evolving complex. PSII-I includes 3 assembly factors not found in mature PSII (Psb27, Psb28 and Psb34). Binds to the lumenal side of PSII, adjacent to the CP43 (psbC) subunit.

The protein localises to the cellular thylakoid membrane. Functionally, plays a role in the repair and/or biogenesis of the calcium-manganese-oxide cluster on the lumenal face of the thylakoid membrane. Its presence in a photosystem II (PSII) preparation prevents binding of other extrinsic subunits PsbO, PsbU and PsbV, and thus assembly of calcium-manganese-oxide cluster. Psb27-containing complexes lack oxygen evolving activity and an oxidizable calcium-manganese-oxide cluster, but have a normal reaction center. This chain is Photosystem II assembly factor lipoprotein Psb27, found in Thermosynechococcus vestitus (strain NIES-2133 / IAM M-273 / BP-1).